Reading from the N-terminus, the 405-residue chain is Prostaglandin E2 receptor EP1 subtype (405 aa).

The Extracellular segment spans residues 1-39; that stretch reads MSPCGLNLSLADEAATCATPRLPNTSVVLPTGDNGTSPA. Asn-7, Asn-24, and Asn-34 each carry an N-linked (GlcNAc...) asparagine glycan. Residues 40-62 form a helical membrane-spanning segment; the sequence is LPIFSMTLGAVSNVLALALLAQV. Topologically, residues 63–80 are cytoplasmic; that stretch reads AGRMRRRRSAATFLLFVA. Residues 81 to 99 form a helical membrane-spanning segment; that stretch reads SLLAIDLAGHVIPGALVLR. The Extracellular segment spans residues 100-113; it reads LYTAGRAPAGGACH. Residues Cys-112 and Cys-190 are joined by a disulfide bond. The helical transmembrane segment at 114–135 threads the bilayer; it reads FLGGCMVFFGLCPLLLGCGMAV. Residues 136–157 lie on the Cytoplasmic side of the membrane; the sequence is ERCVGVTQPLIHAARVSVARAR. The chain crosses the membrane as a helical span at residues 158–179; the sequence is LALAVLAAMALAVALLPLVHVG. Topologically, residues 180 to 202 are extracellular; the sequence is RYELQYPGTWCFISLGPRGGWRQ. Residues 203-228 traverse the membrane as a helical segment; the sequence is ALLAGLFAGLGLAALLAALVCNTLSG. Residues 229–301 lie on the Cytoplasmic side of the membrane; the sequence is LALLRARWRR…HAHDVEMVGQ (73 aa). The segment at 243–287 is disordered; it reads RFRKTAGPDDRRRWGSRGPRLASASSASSITSATATLRSSRGGGS. Residues 262–282 show a composition bias toward low complexity; sequence RLASASSASSITSATATLRSS. A helical transmembrane segment spans residues 302 to 323; sequence LVGIMVVSCICWSPLLVLVVLA. The Extracellular portion of the chain corresponds to 324–337; the sequence is IGGWNSNSLQRPLF. Residues 338-357 form a helical membrane-spanning segment; that stretch reads LAVRLASWNQILDPWVYILL. Topologically, residues 358–405 are cytoplasmic; sequence RQAMLRQLLRLLPLRVSAKGGPTELGLTKSAWEASSLRSSRHSGFSHL.

It belongs to the G-protein coupled receptor 1 family. Post-translationally, phosphorylated. As to expression, abundant in kidney and in a lesser amount in lung.

Its subcellular location is the cell membrane. Receptor for prostaglandin E2 (PGE2). The activity of this receptor is mediated by G(q) proteins which activate a phosphatidylinositol-calcium second messenger system. May play a role as an important modulator of renal function. Implicated the smooth muscle contractile response to PGE2 in various tissues. The sequence is that of Prostaglandin E2 receptor EP1 subtype (Ptger1) from Mus musculus (Mouse).